The chain runs to 296 residues: Lipoyl synthase (296 aa).

Residues Cys-37, Cys-42, Cys-48, Cys-63, Cys-67, Cys-70, and Ser-276 each coordinate [4Fe-4S] cluster. The 217-residue stretch at 49–265 (WSKKHTTVMI…ERVAKTKGFL (217 aa)) folds into the Radical SAM core domain.

The protein belongs to the radical SAM superfamily. Lipoyl synthase family. The cofactor is [4Fe-4S] cluster.

The protein resides in the cytoplasm. The enzyme catalyses [[Fe-S] cluster scaffold protein carrying a second [4Fe-4S](2+) cluster] + N(6)-octanoyl-L-lysyl-[protein] + 2 oxidized [2Fe-2S]-[ferredoxin] + 2 S-adenosyl-L-methionine + 4 H(+) = [[Fe-S] cluster scaffold protein] + N(6)-[(R)-dihydrolipoyl]-L-lysyl-[protein] + 4 Fe(3+) + 2 hydrogen sulfide + 2 5'-deoxyadenosine + 2 L-methionine + 2 reduced [2Fe-2S]-[ferredoxin]. The protein operates within protein modification; protein lipoylation via endogenous pathway; protein N(6)-(lipoyl)lysine from octanoyl-[acyl-carrier-protein]: step 2/2. Its function is as follows. Catalyzes the radical-mediated insertion of two sulfur atoms into the C-6 and C-8 positions of the octanoyl moiety bound to the lipoyl domains of lipoate-dependent enzymes, thereby converting the octanoylated domains into lipoylated derivatives. This Rickettsia conorii (strain ATCC VR-613 / Malish 7) protein is Lipoyl synthase.